A 104-amino-acid chain; its full sequence is Large ribosomal subunit protein uL24 (104 aa).

It belongs to the universal ribosomal protein uL24 family. As to quaternary structure, part of the 50S ribosomal subunit.

Functionally, one of two assembly initiator proteins, it binds directly to the 5'-end of the 23S rRNA, where it nucleates assembly of the 50S subunit. Its function is as follows. One of the proteins that surrounds the polypeptide exit tunnel on the outside of the subunit. The polypeptide is Large ribosomal subunit protein uL24 (Erwinia tasmaniensis (strain DSM 17950 / CFBP 7177 / CIP 109463 / NCPPB 4357 / Et1/99)).